The chain runs to 179 residues: Inner membrane-spanning protein YciB (179 aa).

A run of 5 helical transmembrane segments spans residues 22–42 (IYAA…YSWV), 50–70 (MALI…FFHN), 76–96 (WKVT…QWVM), 121–141 (LAWA…AFWL), and 149–169 (FKVF…GIYI).

The protein belongs to the YciB family.

The protein resides in the cell inner membrane. Plays a role in cell envelope biogenesis, maintenance of cell envelope integrity and membrane homeostasis. The sequence is that of Inner membrane-spanning protein YciB from Klebsiella pneumoniae subsp. pneumoniae (strain ATCC 700721 / MGH 78578).